Here is a 740-residue protein sequence, read N- to C-terminus: Elongation factor 2 (740 aa).

A tr-type G domain is found at 23-264 (AQIRNAGTLA…MIIEHIPPPN (242 aa)). Residues 32–39 (AHVDHGKT), 98–102 (DTPGH), and 152–155 (NKID) each bind GTP. His605 bears the Diphthamide mark.

The protein belongs to the TRAFAC class translation factor GTPase superfamily. Classic translation factor GTPase family. EF-G/EF-2 subfamily.

It is found in the cytoplasm. Catalyzes the GTP-dependent ribosomal translocation step during translation elongation. During this step, the ribosome changes from the pre-translocational (PRE) to the post-translocational (POST) state as the newly formed A-site-bound peptidyl-tRNA and P-site-bound deacylated tRNA move to the P and E sites, respectively. Catalyzes the coordinated movement of the two tRNA molecules, the mRNA and conformational changes in the ribosome. This is Elongation factor 2 from Pyrobaculum aerophilum (strain ATCC 51768 / DSM 7523 / JCM 9630 / CIP 104966 / NBRC 100827 / IM2).